Consider the following 323-residue polypeptide: Thymidylate synthase (323 aa).

Residues R21 and 172–173 contribute to the dUMP site; that span reads RR. Residue C192 is the Nucleophile of the active site. DUMP-binding positions include 214–217, N225, and 255–257; these read RSND and HVY. D217 lines the (6R)-5,10-methylene-5,6,7,8-tetrahydrofolate pocket. A322 provides a ligand contact to (6R)-5,10-methylene-5,6,7,8-tetrahydrofolate.

This sequence belongs to the thymidylate synthase family. Bacterial-type ThyA subfamily. In terms of assembly, homodimer.

Its subcellular location is the cytoplasm. The catalysed reaction is dUMP + (6R)-5,10-methylene-5,6,7,8-tetrahydrofolate = 7,8-dihydrofolate + dTMP. Its pathway is pyrimidine metabolism; dTTP biosynthesis. Catalyzes the reductive methylation of 2'-deoxyuridine-5'-monophosphate (dUMP) to 2'-deoxythymidine-5'-monophosphate (dTMP) while utilizing 5,10-methylenetetrahydrofolate (mTHF) as the methyl donor and reductant in the reaction, yielding dihydrofolate (DHF) as a by-product. This enzymatic reaction provides an intracellular de novo source of dTMP, an essential precursor for DNA biosynthesis. In Pseudomonas putida (strain ATCC 47054 / DSM 6125 / CFBP 8728 / NCIMB 11950 / KT2440), this protein is Thymidylate synthase.